The following is a 481-amino-acid chain: uncharacterized protein (481 aa).

To M.tuberculosis RV2411c.

This is an uncharacterized protein from Synechocystis sp. (strain ATCC 27184 / PCC 6803 / Kazusa).